A 240-amino-acid polypeptide reads, in one-letter code: Pro-opiomelanocortin B (240 aa).

An N-terminal signal peptide occupies residues 1-36; sequence MFGTFLQNQSVRLNMVCAPWLLAVVVVCVCNPGVEG. Pyrrolidone carboxylic acid is present on Q37. Residue H111 is a propeptide. N-acetylserine; in Corticotropin is present on S112. I124 carries the post-translational modification Isoleucine amide.

Belongs to the POMC family. Specific enzymatic cleavages at paired basic residues yield the different active peptides. In terms of processing, acetylation of beta-endorphin occurs in a tissue-specific manner. Pituitary and hypothalamus of adult diploid animals.

The protein resides in the secreted. Stimulates the adrenal glands to release cortisol. In terms of biological role, melanocyte-stimulating hormone alpha: Anorexigenic peptide. Increases the pigmentation of skin by increasing melanin production in melanocytes. Functionally, melanocyte-stimulating hormone beta: Increases the pigmentation of skin by increasing melanin production in melanocytes. Its function is as follows. Beta-endorphin: Endogenous orexigenic opiate. Endogenous opiate. The sequence is that of Pro-opiomelanocortin B (pomcb) from Oncorhynchus mykiss (Rainbow trout).